The sequence spans 121 residues: Large ribosomal subunit protein bL19 (121 aa).

Belongs to the bacterial ribosomal protein bL19 family.

This protein is located at the 30S-50S ribosomal subunit interface and may play a role in the structure and function of the aminoacyl-tRNA binding site. This Chlorobaculum tepidum (strain ATCC 49652 / DSM 12025 / NBRC 103806 / TLS) (Chlorobium tepidum) protein is Large ribosomal subunit protein bL19.